Reading from the N-terminus, the 399-residue chain is Brefeldin A resistance protein (399 aa).

Basic and acidic residues-rich tracts occupy residues 1–31, 49–69, and 101–130; these read MTSKMENNKDESISTKNALEEKSNETKDETS, SKSEPLEDKGNAEVKEFKETT, and KVEEKELKVNKDVDENEGHVAVETGKKESA. Disordered stretches follow at residues 1-173 and 191-269; these read MTSK…FGAF and KKFA…SEII. Low complexity predominate over residues 138 to 157; sequence SPFSQFASFSNASSPFSNVS. 2 stretches are compositionally biased toward basic and acidic residues: residues 205–217 and 241–252; these read SGKEKENDKKSSE and TKSEPKEADKGS. Residues 253 to 263 show a composition bias toward polar residues; it reads GDSTKSTMHQL. Residues 256 to 396 enclose the RanBD1 domain; that stretch reads TKSTMHQLSD…VLEAIPKGGR (141 aa).

In terms of processing, phosphorylated.

The protein resides in the nucleus. The sequence is that of Brefeldin A resistance protein (hba1) from Schizosaccharomyces pombe (strain 972 / ATCC 24843) (Fission yeast).